A 615-amino-acid chain; its full sequence is Delta(14)-sterol reductase LBR (615 aa).

The Tudor domain occupies 1-62; sequence MPSRKFADGE…DIKPLTSFRQ (62 aa). Over 1–211 the chain is Nuclear; the sequence is MPSRKFADGE…IRAKDLEFGG (211 aa). The tract at residues 53-109 is disordered; it reads DIKPLTSFRQRKGGSTSSSPSRRRGSRSRSRSRSPGRPPKSARRSASASHQADIKEA. An N6-acetyllysine modification is found at Lys-55. Phosphothreonine is present on Thr-58. 2 positions are modified to phosphoserine: Ser-59 and Ser-67. A phosphoserine; by CDK1 mark is found at Ser-71 and Ser-86. A compositionally biased stretch (basic residues) spans 73–86; sequence SRRRGSRSRSRSRS. Ser-97 and Ser-99 each carry phosphoserine. Thr-118 carries the post-translational modification Phosphothreonine. Ser-128 is modified (phosphoserine). Residue Thr-200 is modified to Phosphothreonine. 8 helical membrane-spanning segments follow: residues 212–232, 258–278, 299–319, 326–346, 415–435, 447–467, 481–501, and 561–581; these read VPGVFLIMFGLPVFLFLLLLM, VFGVYLLWFLIQVVFYLLPIG, FYAFILTSAVIGTSLFQGVEF, FLQFALAATVFCVVLSVYLYM, VPSLAMILVNSFQLLYVVDAL, IIHDGFGFMLAFGDLVWVPFI, EVSWPMASLIIVLKFCGYVIF, and ACGFNHILPYFYIIYFTMLLV. Lys-594 and Lys-601 each carry N6-acetyllysine.

Belongs to the ERG4/ERG24 family. As to quaternary structure, interacts with CBX5. Interacts with DNA. Interaction with DNA is sequence independent with higher affinity for supercoiled and relaxed circular DNA than linear DNA. Interacts with lamin B. Interacts with CLNK. Interacts with TMEM147; promoting LBR localization to the nucleus inner membrane. In terms of processing, phosphorylated by CDK1 in mitosis when the inner nuclear membrane breaks down into vesicles that dissociate from the lamina and the chromatin. It is phosphorylated by different protein kinases in interphase when the membrane is associated with these structures. Phosphorylation of LBR and HP1 proteins may be responsible for some of the alterations in chromatin organization and nuclear structure which occur at various times during the cell cycle. Phosphorylated by SRPK1. In late anaphase LBR is dephosphorylated, probably by PP1 and/or PP2A, allowing reassociation with chromatin.

It localises to the nucleus inner membrane. The protein localises to the nucleus. The protein resides in the cytoplasm. It is found in the endoplasmic reticulum membrane. It catalyses the reaction 5alpha-cholest-8,14-dien-3beta-ol + NADPH + H(+) = 5alpha-cholest-8-en-3beta-ol + NADP(+). The catalysed reaction is 4,4-dimethyl-5alpha-cholesta-8,24-dien-3beta-ol + NADP(+) = 4,4-dimethyl-5alpha-cholesta-8,14,24-trien-3beta-ol + NADPH + H(+). The enzyme catalyses 4,4-dimethyl-8,14-cholestadien-3beta-ol + NADPH + H(+) = 4,4-dimethyl-5alpha-cholest-8-en-3beta-ol + NADP(+). The protein operates within steroid biosynthesis; cholesterol biosynthesis. Its function is as follows. Catalyzes the reduction of the C14-unsaturated bond of lanosterol, as part of the metabolic pathway leading to cholesterol biosynthesis. Plays a critical role in myeloid cell cholesterol biosynthesis which is essential to both myeloid cell growth and functional maturation. Mediates the activation of NADPH oxidases, perhaps by maintaining critical levels of cholesterol required for membrane lipid raft formation during neutrophil differentiation. Anchors the lamina and the heterochromatin to the inner nuclear membrane. In Pongo abelii (Sumatran orangutan), this protein is Delta(14)-sterol reductase LBR (LBR).